Reading from the N-terminus, the 70-residue chain is Small, acid-soluble spore protein 1 (70 aa).

It belongs to the alpha/beta-type SASP family.

Its function is as follows. SASP are bound to spore DNA. They are double-stranded DNA-binding proteins that cause DNA to change to an a-like conformation. They protect the DNA backbone from chemical and enzymatic cleavage and are thus involved in dormant spore's high resistance to UV light. This Geobacillus stearothermophilus (Bacillus stearothermophilus) protein is Small, acid-soluble spore protein 1 (sasP-1).